A 323-amino-acid chain; its full sequence is Acetyl-coenzyme A carboxylase carboxyl transferase subunit alpha (323 aa).

A CoA carboxyltransferase C-terminal domain is found at 39–293; that stretch reads RLAGKSQQLT…KRSLAESLRQ (255 aa).

Belongs to the AccA family. Acetyl-CoA carboxylase is a heterohexamer composed of biotin carboxyl carrier protein (AccB), biotin carboxylase (AccC) and two subunits each of ACCase subunit alpha (AccA) and ACCase subunit beta (AccD).

It is found in the cytoplasm. The catalysed reaction is N(6)-carboxybiotinyl-L-lysyl-[protein] + acetyl-CoA = N(6)-biotinyl-L-lysyl-[protein] + malonyl-CoA. It participates in lipid metabolism; malonyl-CoA biosynthesis; malonyl-CoA from acetyl-CoA: step 1/1. Component of the acetyl coenzyme A carboxylase (ACC) complex. First, biotin carboxylase catalyzes the carboxylation of biotin on its carrier protein (BCCP) and then the CO(2) group is transferred by the carboxyltransferase to acetyl-CoA to form malonyl-CoA. This chain is Acetyl-coenzyme A carboxylase carboxyl transferase subunit alpha, found in Cupriavidus pinatubonensis (strain JMP 134 / LMG 1197) (Cupriavidus necator (strain JMP 134)).